The primary structure comprises 330 residues: Aspartate--ammonia ligase (330 aa).

The protein belongs to the class-II aminoacyl-tRNA synthetase family. AsnA subfamily.

Its subcellular location is the cytoplasm. The catalysed reaction is L-aspartate + NH4(+) + ATP = L-asparagine + AMP + diphosphate + H(+). It participates in amino-acid biosynthesis; L-asparagine biosynthesis; L-asparagine from L-aspartate (ammonia route): step 1/1. This Shigella boydii serotype 18 (strain CDC 3083-94 / BS512) protein is Aspartate--ammonia ligase.